The sequence spans 251 residues: 2,3-bisphosphoglycerate-dependent phosphoglycerate mutase 2 (251 aa).

Residues 8–15 (RHGESTWN), 21–22 (TG), R60, 87–90 (ERHY), K98, 114–115 (RR), and 183–184 (GN) contribute to the substrate site. Residue H9 is the Tele-phosphohistidine intermediate of the active site. E87 functions as the Proton donor/acceptor in the catalytic mechanism.

This sequence belongs to the phosphoglycerate mutase family. BPG-dependent PGAM subfamily. As to quaternary structure, homodimer.

The catalysed reaction is (2R)-2-phosphoglycerate = (2R)-3-phosphoglycerate. The protein operates within carbohydrate degradation; glycolysis; pyruvate from D-glyceraldehyde 3-phosphate: step 3/5. Its function is as follows. Catalyzes the interconversion of 2-phosphoglycerate and 3-phosphoglycerate. The polypeptide is 2,3-bisphosphoglycerate-dependent phosphoglycerate mutase 2 (Nitrosospira multiformis (strain ATCC 25196 / NCIMB 11849 / C 71)).